The sequence spans 4194 residues: MKAERDTESIAGGREPIAVVGSGMRFPGSSSSPSKLWKLLLKPRDLLSRIPENRFNADSFYHPNSSHHGTTDVQESYFLEEDHRHFDAAFFNIKPVEAHAIDPQQRVLMEVVYESLEASGMTMESLAGSPTGVYVGLMCADYAELVNSDVNALPTYTPTGNARSIMSNRISYFFDWHGPSMTIDTACSSSLVAVHEAVQLLRSGDSDVAIAAGSNLMLAPLQYIAASKLKMLSADSRSRMWDANASGYARGEGVAAVVLKRLSSAIADGDHIECIIRETAINQDGRTKGITMPSSKAQADLIAKTYAKAGLDPRNPDQRCQYFEAHGTGTAAGDPKEAEAISKAFFHPGEVVSGASDPLYVGSIKTVIGHTEGTAGLAGLLRASLAVQHGTIPPNMLFDSLHPNVEPFYTNLKIATEPTAWPKLAEGTSRRCSINSFGFGGTNAHAIVENYVPPAPVQVSQASPGRQFTPFTFSAASERSLRGVLADYAEHLRLHPDISLHDLAYTLHARRSGHAVRTHVSADSVADLHTKIDGLLRAPTSSDGGSRNLGLRSRPWSSPLRALGVFTGQGAQWATMGRELVLHSQYCRDLVRDVDRMLQLLPEAERPDWSVMDQVTCDAPLSRIDSAVISQPLCTVVQIMLFDLLTSAGVRFQAVVGHSSGEIAAAYAAGYLTRDDAVKVAYYRGYFTSLTPSDRPGAMMAVGTSAEDANELCNLSMFKGRLAVAAINSSSSVTISGDRDAVEQAKEVLEDEKKFARILKVDKAYHSHHMLPCAEEYLRALERSGINPLQGRDDCVWHSSTYENRHVHGARDLAGQYWADNMVRPVLFSHCVDAAAAGSEARFDFAVELGPHPTLKGPALQTIQEAHKVTVPYTGLLQRGKDDVQAFSDALGYLWSQFSPSIVDLGAFDTLVSGIKSRKMLQDLPAYHWDHDNIFWHKSRPTKAFLTQKSIPHPLLGTRTTDVMDEQIRWRNHLLLNELPWIRGHQLQGQVIYPATAYLSTAIEAAMFLVPEGASAQLVEVRDFNLGKPLIFGEDGSGIETVFTLSDITKGEDKTYSASFTYHACSNADAEQLSTHATGRVIVITGEASAGLLPSQSKDLPNLVDIPEDRFYKSLETVGYGYSGDFRAMSSIQRKLNFSSSRVRVPLQEDDRVKLMLHPAMLDTALQGIFLAYCWPGDGSLDQLHVPTGIQSCRVNAGLCRQQLESATEVTSSSQLTGNPLVTKNLNGNVEISTEDGSCLVQMEGLKVVSFSEPTAEADRAVFTEYVWDVLAPDAERAMQGKRATAEDYELAFAIERVSVYYMRQLASLFPEETRSSLNLEWHFVCLFNFITHVLSTTGAGQRKTAKKEWLQDSAADIERIKERYADTVDMRLARAVGDNLPAVIRGETTMLEHITKDNLLDRFYEVGLGLKEFSGYVGKTVEQVVHRHPHMKMLEIGAGTGGATKVIMGGIGRAFSSYTYTDISPNFFETASEVFSSVADKMIFKTLDVEKDIVQQGYEEHSYDLVVASLVLHATKNLKQTLANTRRLLRPGGYLVIQEVCNNEPSRTGFMMCALPGWWLGQDDGRKLSPCVSTPEWNDLLLQTGFSGVDSTTHELDSVPFQLAVIVSQAVDERVSLLREPLALVGTDSPVAEHWDLVLVGGQSPKSSHLIEEIVGMLQSPNVSHTIVKTVDDIDSSTISETTAILFLEELDKPVFKGITERTLEGLKRLFETQRTVLWVTQGSRSADPYMGMSVGLGRTLILENPDLVLQFLDLEPGIEPEARTILEALLRLRQSDRWAKEGGTFEDVLWTNEHELAYINGELCLSRVHLAAPLNDRFNASKRTVLEAMNPQSVPMNLSLGQTIAPGLVLNDHLASKMLGSPDAVESESETVIRVSHSLLMPDLATIPPSYLVLGTNTGQNGRIVLAISETNGSYASVPPGRVLDVAPLQGEEPLLLSRLHTQLQVDGMLSICEDGSVLAIHEPPVDLASAIVERGASLGIHVYITTAASPSDRSWTQVHSYSPRTVVKSLLPPDISVFIDCSTRSLSQRAGSLIASCLPETCLKTTSASLPSLRRIRGFSVADMIDNLKGALPRALEKLAAPESSTNTLPLIRADQLGPGSSDADLFTPAIVAWNTTGKVPVQVSTVDSHTTFRSDRTYVFFGLTSDLAQSICDWMVTHGARNIVLTSRHPNIDARWKRTLKEAGVRVEVFSNDITDKAALVSLVDHIRQNLPPIAGIAHGAMVLNDVSFFEMTFEKMIQVIRPKVQGAIYLDELFQEPTLDFCIFFSSCTAIAGNRGQSAYTAANMFMSSLASQRREKGLAGSILHIGAVMGVGYINRGFKDYIFTALSRAGYMMVTEREFHLCFGEAVLASHPKSGRNPDVVTALETSKFGDTLPLWAKFPRFQYCLAAADSGSLKQAQKKHNAAVSTKLRLAEATTAEEALEIVQDSFYQKLQVVLQISPDTEKSQVLASGTDDLGIDSLVAVEIRSWFIKEIDTEIAVFKVLSGISIAELVEFAVENMPGELTPNMSDSLNAVPETPTAPVIPASPPSGSVSSAPSSDPPKTTAETSQHLSESSSKTSQPDEKQSEERDSSTASLEEPLETAYEKVLPVSPGQARFWFLKHLMEDQTTANNTILVSVQGQVRLDSLDAAVRRVGARHESLRTSFFVDKNQKAVQAISDSSRLYLQTKEIHSEAQVEAEFEALKNHAYDLINGECMQLIHLGMNATESYLLIGSHHIVMDGISLEVFLNDVQKAYNGQSLSSQVYQYSDYSEKLRQELGNGAMQKEIEYWRSEFAEAPTPLPLLPFAAVKQRKALTAYRHTSVSRTVDAKVARQISDTCRKLKANVFHFYLGVFEVLLFKLFGKNDVCIGMADANRWDDQVAQSIGMYLNLLPLRFRLDKQQSFETVLKDTRRKAYNAMSNSRLPFDALLDNLNCDRSTAFSPLFQAFINYRQGVRENRTLGSARGVTKKISLPRAGYDMSLDIIENPGGDTRLAFMLQDALYSEEETAQVLELYCNLLSELSGSPGQILKDVSLFTRSDVDKAVQLGRGAALPSQGSETLVHRIDAMIANPPQEIALRDHTGRSWTWEQLGQQVNRMASTLLQVNVTAGSVIAVHQEASPDLVFSLLAILRVGGIYVPLDSNLPEARLRSIITECDPSVLLLDQTTLARAGDLALPPSVTVLDVSSLPPRVKDAICPTTARRATDPAAILFTSGSTGVPKGVILSHGGLRNHVEALVHTHGFGRETVLQQSSVGFDMSLNQIFMSLANGGTLVLVPEPFRKDSAAVAKMILEQNITYTSATPSEYLAWLRHGSNSLFQSTSWRFATAGGEQFTPQLLEAFQTLGTQFEHPFHAFNAYGPTECTLSSNEMKVSLEASSSARQITAGKALPNCSFYVVDDSLDPLPVGWPGEILIGGAGVALGYLNNPAETARKFLVDPKASSSAMGQGWGRMYRTGDKGVLRPDGTLQILGRIEGDTQIKLRGLRIEMQDVEKSILDASEGQISEVGVTPRGDPTILVAHVVLSRNASFSNKQQYLRDLSASLPLPQYMRPAAIIPIDCMPLTASGKVDRRALQGLELSSTRGQSHIQDQGAATQLTEAESELAQIWKDVLPQQLQEVHLIDGASDFFQVGGNSMLLIELRRLVASRLQVDIPLLRLFESSTLGAMAAVIQDLSTVAQVPEVGWEAETQVPSSWAQGDVQPAHLQSHSSPRTVVITGATGFLGKQLVRLLVANANIHRVHCIAVRNVEKLAEFAGSDKVSIHPGDLAQPRCGLSEADAVSIFRSTDAIIHNGADVSFLKSYSSLRAPNVLSTKELVKLSLPRLIPLHYVSTATVGKLNRSDTLAPESLARFPPGATFSDGYAASKWASEVFLENATKKLGLPTFIHRPSSITGDQAAENDIVPNLLKYSSLIKALPDTAKWSGYVDLISVERAAAGIIGSVLQDRPDLGTTAPETQFLHQTGEKVIPAQSIKAVLSPKDEPEWDSLAMAEWVSRAVQKGMNPLIGEFLLSVDRGQGLSVGQKLLLKTDQAKKGMNFSTSERLQCRRDKTNPGRQVCDQGPSSVHPQPAFHRGRDVSPRHPALDHPDPIQGRSHVPHVRETEQQTDGVPRHGARGSKLISTDEQIDDAESVVDGVDHDEDPAPPQASRCPPSWEVGVCALAEGRLHPGSEDEVLVKSKGEYPCGSDGREEAEEAEWQCDEGHGDGEPDD.

The 437-residue stretch at 14 to 450 folds into the Ketosynthase family 3 (KS3) domain; sequence REPIAVVGSG…GTNAHAIVEN (437 aa). Catalysis depends on for beta-ketoacyl synthase activity residues cysteine 187, histidine 326, and histidine 370. The Malonyl-CoA:ACP transacylase (MAT) domain occupies 565–887; it reads VFTGQGAQWA…QRGKDDVQAF (323 aa). The tract at residues 953–1088 is N-terminal hotdog fold; sequence HPLLGTRTTD…GRVIVITGEA (136 aa). Residues 953 to 1257 enclose the PKS/mFAS DH domain; sequence HPLLGTRTTD…VVSFSEPTAE (305 aa). The active-site Proton acceptor; for dehydratase activity is histidine 985. The interval 1103 to 1257 is C-terminal hotdog fold; the sequence is LVDIPEDRFY…VVSFSEPTAE (155 aa). Catalysis depends on aspartate 1163, which acts as the Proton donor; for dehydratase activity. The tract at residues 1302 to 1596 is methyltransferase (cMeT) domain; the sequence is YMRQLASLFP…FSGVDSTTHE (295 aa). The 174-residue stretch at 2141-2314 folds into the Ketoreductase (KR) domain; that stretch reads TYVFFGLTSD…AGSILHIGAV (174 aa). Residues 2421 to 2505 form the Carrier 1 domain; it reads TTAEEALEIV…ELVEFAVENM (85 aa). The residue at position 2465 (serine 2465) is an O-(pantetheine 4'-phosphoryl)serine. The disordered stretch occupies residues 2512–2583; sequence NMSDSLNAVP…ERDSSTASLE (72 aa). Low complexity predominate over residues 2526 to 2547; that stretch reads APVIPASPPSGSVSSAPSSDPP. Over residues 2550–2565 the composition is skewed to polar residues; it reads TAETSQHLSESSSKTS. The span at 2566–2577 shows a compositional bias: basic and acidic residues; the sequence is QPDEKQSEERDS. Positions 2591 to 3023 are condensation; the sequence is EKVLPVSPGQ…QILKDVSLFT (433 aa). Residues 3056–3467 form an adenylation region; the sequence is ANPPQEIALR…RIEGDTQIKL (412 aa). The Carrier 2 domain occupies 3580–3660; the sequence is TQLTEAESEL…AMAAVIQDLS (81 aa). Serine 3620 bears the O-(pantetheine 4'-phosphoryl)serine mark. The Thioester reductase (TE) domain maps to 3701-3920; the sequence is ITGATGFLGK…VDLISVERAA (220 aa). Disordered stretches follow at residues 4031–4110 and 4163–4194; these read RRDK…DEQI and KGEYPCGSDGREEAEEAEWQCDEGHGDGEPDD. Positions 4057–4072 are enriched in basic and acidic residues; sequence RGRDVSPRHPALDHPD. The span at 4174–4183 shows a compositional bias: acidic residues; sequence EEAEEAEWQC. Residues 4184 to 4194 are compositionally biased toward basic and acidic residues; sequence DEGHGDGEPDD.

It in the C-terminal section; belongs to the NRP synthetase family. The cofactor is pantetheine 4'-phosphate.

It functions in the pathway mycotoxin biosynthesis. In terms of biological role, hybrid PKS-NRPS synthetase; part of the gene cluster that mediates the biosynthesis of pyrrocidines, fungal natural products containing a macrocyclic para-cyclophane connected to a decahydrofluorene ring system that show potent antibiotic activities toward Gram-negative bacteria. Within the pathway, the PKS-NRPS pydA, with the help of the trans-enoyl reductase pydC, synthesize the polyketide-tyrosyl acyl thioester product which can be reductively off-loaded by the terminal reductase (R) domain in pydA. The PKS module of pydA acts in combination with the trans-acting enoyl reductase pydC to produce a methylated polyketide attached to the ACP domain. In parallel, the adenylation (A) domain of the NRPS module activated L-tyrosine, which is then transferred to the ACP domain. The condensation (C) domain subsequently link this group to the polyketide chain, forming an enzyme-bound amide. The alpha/beta hydrolase pydG is then required to catalyze the subsequent Knoevenagel condensation that affords the 3-pyrrolin-2-one ring, whereas the four proteins pydB, pydE, pydX and pydZ then function synergistically to form the cyclophane. PydB and the membrane-bound pydX and pydZ are lipid-binding proteins that can sequester and mold the pdyG product into the inverse S-shape. Binding of the medium chain reductase pydE to the complex would trigger the cascade oxidative cyclization. PydY is involved in the Diels-Alder cycloaddition that forms the decahydrofluorene core. Additional non-enzymatic hydroxylation yields pyrrocidine A2 which can be further reduced into pyrrocidine B by an endogenous reductase. The sequence is that of Hybrid PKS-NRPS synthetase pydA from Acremonium sp.